Reading from the N-terminus, the 95-residue chain is Aspartyl/glutamyl-tRNA(Asn/Gln) amidotransferase subunit C (95 aa).

The protein belongs to the GatC family. Heterotrimer of A, B and C subunits.

The catalysed reaction is L-glutamyl-tRNA(Gln) + L-glutamine + ATP + H2O = L-glutaminyl-tRNA(Gln) + L-glutamate + ADP + phosphate + H(+). It catalyses the reaction L-aspartyl-tRNA(Asn) + L-glutamine + ATP + H2O = L-asparaginyl-tRNA(Asn) + L-glutamate + ADP + phosphate + 2 H(+). Its function is as follows. Allows the formation of correctly charged Asn-tRNA(Asn) or Gln-tRNA(Gln) through the transamidation of misacylated Asp-tRNA(Asn) or Glu-tRNA(Gln) in organisms which lack either or both of asparaginyl-tRNA or glutaminyl-tRNA synthetases. The reaction takes place in the presence of glutamine and ATP through an activated phospho-Asp-tRNA(Asn) or phospho-Glu-tRNA(Gln). In Syntrophus aciditrophicus (strain SB), this protein is Aspartyl/glutamyl-tRNA(Asn/Gln) amidotransferase subunit C.